An 81-amino-acid chain; its full sequence is Defensin-like protein 115 (81 aa).

Residues methionine 1–cysteine 24 form the signal peptide. 4 disulfides stabilise this stretch: cysteine 40-cysteine 78, cysteine 46-cysteine 69, cysteine 54-cysteine 76, and cysteine 58-cysteine 77.

Belongs to the DEFL family.

It localises to the secreted. This is Defensin-like protein 115 from Arabidopsis thaliana (Mouse-ear cress).